A 97-amino-acid chain; its full sequence is Defective intron-associated endonuclease 3 (97 aa).

Functionally, this endonuclease is specific to the nrdB gene splice junction and is involved in intron homing. The polypeptide is Defective intron-associated endonuclease 3 (ITEVIIIR) (Escherichia coli (Bacteriophage T4)).